The following is a 234-amino-acid chain: Glucosamine-6-phosphate deaminase (234 aa).

The active-site Proton acceptor; for enolization step is aspartate 62. The For ring-opening step role is filled by asparagine 128. Histidine 130 serves as the catalytic Proton acceptor; for ring-opening step. Glutamate 135 acts as the For ring-opening step in catalysis.

It belongs to the glucosamine/galactosamine-6-phosphate isomerase family. NagB subfamily.

The catalysed reaction is alpha-D-glucosamine 6-phosphate + H2O = beta-D-fructose 6-phosphate + NH4(+). It participates in amino-sugar metabolism; N-acetylneuraminate degradation; D-fructose 6-phosphate from N-acetylneuraminate: step 5/5. In terms of biological role, catalyzes the reversible isomerization-deamination of glucosamine 6-phosphate (GlcN6P) to form fructose 6-phosphate (Fru6P) and ammonium ion. The polypeptide is Glucosamine-6-phosphate deaminase (Streptococcus pyogenes serotype M1).